The following is a 473-amino-acid chain: Glycosyl hydrolase family 109 protein 2 (473 aa).

A signal peptide (tat-type signal) is located at residues M1–A31. NAD(+) is bound by residues G77–R78, D99, W148–H151, E168–V169, and N197. Substrate-binding positions include Y226, R244, Y256 to H259, and Y339. Position 256 (Y256) interacts with NAD(+).

The protein belongs to the Gfo/Idh/MocA family. Glycosyl hydrolase 109 subfamily. It depends on NAD(+) as a cofactor. Predicted to be exported by the Tat system. The position of the signal peptide cleavage has not been experimentally proven.

In terms of biological role, glycosidase. The polypeptide is Glycosyl hydrolase family 109 protein 2 (Akkermansia muciniphila (strain ATCC BAA-835 / DSM 22959 / JCM 33894 / BCRC 81048 / CCUG 64013 / CIP 107961 / Muc)).